Consider the following 445-residue polypeptide: Argininosuccinate synthase (445 aa).

Residues 17-25 (AFSGGLDTS) and alanine 43 contribute to the ATP site. Residue tyrosine 99 coordinates L-citrulline. ATP is bound by residues glycine 129 and threonine 131. Residues threonine 131, asparagine 135, and aspartate 136 each contribute to the L-aspartate site. Asparagine 135 contacts L-citrulline. Aspartate 136 contributes to the ATP binding site. Positions 139 and 192 each coordinate L-citrulline. Aspartate 194 contributes to the ATP binding site. The L-citrulline site is built by threonine 201, glutamate 203, and glutamate 280.

The protein belongs to the argininosuccinate synthase family. Type 2 subfamily. In terms of assembly, homotetramer.

Its subcellular location is the cytoplasm. The enzyme catalyses L-citrulline + L-aspartate + ATP = 2-(N(omega)-L-arginino)succinate + AMP + diphosphate + H(+). The protein operates within amino-acid biosynthesis; L-arginine biosynthesis; L-arginine from L-ornithine and carbamoyl phosphate: step 2/3. This is Argininosuccinate synthase from Rhodopseudomonas palustris (strain BisB18).